We begin with the raw amino-acid sequence, 181 residues long: Inner membrane-spanning protein YciB (181 aa).

The next 5 helical transmembrane spans lie at 22–42 (IYTA…VTYA), 50–70 (MQLI…FLHD), 80–100 (IVYC…KPVI), 122–142 (WVLF…EMPL), and 148–168 (FKVF…GMYV).

It belongs to the YciB family.

The protein localises to the cell inner membrane. In terms of biological role, plays a role in cell envelope biogenesis, maintenance of cell envelope integrity and membrane homeostasis. This is Inner membrane-spanning protein YciB from Aliivibrio fischeri (strain ATCC 700601 / ES114) (Vibrio fischeri).